A 470-amino-acid chain; its full sequence is Cysteine--tRNA ligase (470 aa).

A Zn(2+)-binding site is contributed by Cys-28. Residues 30–40 (PTVYNYIHIGN) carry the 'HIGH' region motif. 3 residues coordinate Zn(2+): Cys-212, His-237, and Glu-241. The 'KMSKS' region motif lies at 271–275 (KMSKS). Lys-274 contributes to the ATP binding site.

It belongs to the class-I aminoacyl-tRNA synthetase family. In terms of assembly, monomer. Zn(2+) is required as a cofactor.

The protein localises to the cytoplasm. It catalyses the reaction tRNA(Cys) + L-cysteine + ATP = L-cysteinyl-tRNA(Cys) + AMP + diphosphate. The polypeptide is Cysteine--tRNA ligase (Limosilactobacillus reuteri (strain DSM 20016) (Lactobacillus reuteri)).